Here is a 339-residue protein sequence, read N- to C-terminus: Methionyl-tRNA formyltransferase (339 aa).

Residue 110–113 (SLLP) coordinates (6S)-5,6,7,8-tetrahydrofolate.

Belongs to the Fmt family.

The enzyme catalyses L-methionyl-tRNA(fMet) + (6R)-10-formyltetrahydrofolate = N-formyl-L-methionyl-tRNA(fMet) + (6S)-5,6,7,8-tetrahydrofolate + H(+). Its function is as follows. Attaches a formyl group to the free amino group of methionyl-tRNA(fMet). The formyl group appears to play a dual role in the initiator identity of N-formylmethionyl-tRNA by promoting its recognition by IF2 and preventing the misappropriation of this tRNA by the elongation apparatus. The chain is Methionyl-tRNA formyltransferase from Prochlorococcus marinus (strain SARG / CCMP1375 / SS120).